The chain runs to 240 residues: Alkaline phosphatase synthesis transcriptional regulatory protein PhoP (240 aa).

Residues 4 to 118 (KILVVDDEES…EVNARVKAIL (115 aa)) enclose the Response regulatory domain. Aspartate 53 is modified (4-aspartylphosphate). Residues 136-235 (EGQIVIGDLK…IRGLGYKLEE (100 aa)) constitute a DNA-binding region (ompR/PhoB-type).

In terms of processing, phosphorylated by PhoR.

Its subcellular location is the cytoplasm. Functionally, member of the two-component regulatory system PhoP/PhoR involved in the regulation of alkaline phosphatase genes phoA and phoB and of phosphodiesterase. The polypeptide is Alkaline phosphatase synthesis transcriptional regulatory protein PhoP (phoP) (Bacillus subtilis (strain 168)).